A 172-amino-acid chain; its full sequence is Shikimate kinase (172 aa).

11–16 (GCGKST) lines the ATP pocket. Residue serine 15 coordinates Mg(2+). Positions 33, 57, and 80 each coordinate substrate. Residue arginine 120 coordinates ATP. Arginine 142 contacts substrate. Arginine 158 contacts ATP.

This sequence belongs to the shikimate kinase family. In terms of assembly, monomer. The cofactor is Mg(2+).

The protein resides in the cytoplasm. The enzyme catalyses shikimate + ATP = 3-phosphoshikimate + ADP + H(+). The protein operates within metabolic intermediate biosynthesis; chorismate biosynthesis; chorismate from D-erythrose 4-phosphate and phosphoenolpyruvate: step 5/7. Its function is as follows. Catalyzes the specific phosphorylation of the 3-hydroxyl group of shikimic acid using ATP as a cosubstrate. The polypeptide is Shikimate kinase (Flavobacterium johnsoniae (strain ATCC 17061 / DSM 2064 / JCM 8514 / BCRC 14874 / CCUG 350202 / NBRC 14942 / NCIMB 11054 / UW101) (Cytophaga johnsonae)).